We begin with the raw amino-acid sequence, 376 residues long: 26S proteasome non-ATPase regulatory subunit 13 (376 aa).

The PCI domain occupies 171–338; the sequence is SYYKDALRFL…KRVHMTWVQP (168 aa).

Component of the 19S proteasome regulatory particle complex. The 26S proteasome consists of a 20S core particle (CP) and two 19S regulatory subunits (RP). The regulatory particle is made of a lid composed of 9 subunits including PSMD13, a base containing 6 ATPases and few additional components.

Component of the 26S proteasome, a multiprotein complex involved in the ATP-dependent degradation of ubiquitinated proteins. This complex plays a key role in the maintenance of protein homeostasis by removing misfolded or damaged proteins, which could impair cellular functions, and by removing proteins whose functions are no longer required. Therefore, the proteasome participates in numerous cellular processes, including cell cycle progression, apoptosis, or DNA damage repair. The sequence is that of 26S proteasome non-ATPase regulatory subunit 13 from Gallus gallus (Chicken).